A 666-amino-acid chain; its full sequence is TATA box-binding protein-associated factor RNA polymerase I subunit B (666 aa).

The RRN7-type zinc-finger motif lies at 1-29 (MICTECENDAFDEEDDGYYYCQRCGVQVE). Cys-3, Cys-6, Cys-21, and Cys-24 together coordinate Zn(2+). The segment at 30 to 64 (NLIQTGVDDGDLIGEGGGTQGALYNPKHRRTEPQP) is B-reader. Disordered regions lie at residues 45–110 (GGGT…VDKE) and 189–208 (DSEHQSEDGEVKDAKRLKRH). Residues 65–80 (ITPSQPRFTDDTSRYS) form a B-linker region. Over residues 78-89 (RYSQFKSQFESE) the composition is skewed to polar residues. Positions 81–285 (QFKSQFESEN…REQMGERSAA (205 aa)) are N-terminal cyclin fold. 2 stretches are compositionally biased toward basic and acidic residues: residues 90 to 110 (NGNKELPREVKRAPDSYVDKE) and 189 to 202 (DSEHQSEDGEVKDA). Residues 286–288 (CPV) form a C-terminal cyclin fold region. Residues 515 to 548 (SDGNNPCSSSSRRNESVSIGLDLSSSEHRESSSP) are disordered. The span at 539–548 (SSEHRESSSP) shows a compositional bias: basic and acidic residues.

This sequence belongs to the RRN7/TAF1B family. Interacts with TFIIF. Interacts with MEE14/CBP1, TBP1 and NRPB1 (via CTD). Expressed at high levels in seedlings, inflorescences and young siliques and at lower levels in roots. Not detected in leaves and stems. Detected in root tips and shoot apical meristems, in anthers, primarily in microspores with weaker expression in mature pollen grains and in the central cell of the mature female gametophyte. Not expressed in synergids, egg cells, antipodal cells, endosperm cells and fertilized egg cells.

It localises to the nucleus. Its subcellular location is the nucleolus. Component of RNA polymerase I core factor complex that acts as a GTF2B/TFIIB-like factor and plays a key role in multiple steps during transcription initiation such as pre-initiation complex (PIC) assembly and postpolymerase recruitment events in polymerase I (Pol I) transcription. Binds rDNA promoters and plays a role in Pol I recruitment. Required for the development of the one-cell zygote and endosperm in embryos. Required for micropylar pollen tube guidance, but has no effect on ovule development and gametophytic cell fate specification. May regulate the transcription of secreted cysteine-rich peptide (CRP) genes in the embryo sac. In Arabidopsis thaliana (Mouse-ear cress), this protein is TATA box-binding protein-associated factor RNA polymerase I subunit B.